The primary structure comprises 118 residues: Small ribosomal subunit protein uS13 (118 aa).

The interval 91–118 (HRHSLPVRGQRTKTNARTRKGPRKPIRK) is disordered.

Belongs to the universal ribosomal protein uS13 family. In terms of assembly, part of the 30S ribosomal subunit. Forms a loose heterodimer with protein S19. Forms two bridges to the 50S subunit in the 70S ribosome.

Functionally, located at the top of the head of the 30S subunit, it contacts several helices of the 16S rRNA. In the 70S ribosome it contacts the 23S rRNA (bridge B1a) and protein L5 of the 50S subunit (bridge B1b), connecting the 2 subunits; these bridges are implicated in subunit movement. Contacts the tRNAs in the A and P-sites. The sequence is that of Small ribosomal subunit protein uS13 from Hahella chejuensis (strain KCTC 2396).